A 683-amino-acid polypeptide reads, in one-letter code: Transforming growth factor-beta-induced protein ig-h3 (683 aa).

A signal peptide spans 1–23; that stretch reads MALLMRLLTLALALSVGPAGTLA. At Ser-37 the chain carries Phosphoserine. One can recognise an EMI domain in the interval 45-99; the sequence is GPNVCAVQKVIGTNKKYFTNCKQWYQRKICGKSTVISYECCPGYEKVPGEKGCPA. 5 disulfides stabilise this stretch: Cys-49/Cys-85, Cys-74/Cys-339, Cys-84/Cys-97, Cys-214/Cys-317, and Cys-473/Cys-478. Cys-65 is modified (S-cysteinyl cysteine). FAS1 domains follow at residues 103-236, 240-371, 375-498, and 502-632; these read LSNL…DKVI, TNNI…DELL, SAKT…DRML, and MGTV…NTVL. The Cell attachment site motif lies at 642–644; that stretch reads RGD.

Binds to type I, II, and IV collagens. In terms of processing, gamma-carboxylation is controversial. Gamma-carboxyglutamated; gamma-carboxyglutamate residues are formed by vitamin K dependent carboxylation; this may be required for calcium binding. According to a more recent report, does not contain vitamin K-dependent gamma-carboxyglutamate residues. Post-translationally, the EMI domain contains 2 expected intradomain disulfide bridges (Cys-49-Cys85 and Cys-84-Cys-97) and one unusual interdomain disulfide bridge to the second FAS1 domain (Cys-74-Cys-339). This arrangement violates the predicted disulfide bridge pattern of an EMI domain. In terms of tissue distribution, expressed in heart, kidney, liver, skeletal muscle, testis, thyroid and uterus.

It localises to the secreted. The protein localises to the extracellular space. It is found in the extracellular matrix. In terms of biological role, plays a role in cell adhesion. May play a role in cell-collagen interactions. The polypeptide is Transforming growth factor-beta-induced protein ig-h3 (Tgfbi) (Mus musculus (Mouse)).